A 485-amino-acid chain; its full sequence is D-alanine--D-alanyl carrier protein ligase (485 aa).

Position 144–145 (144–145 (TS)) interacts with ATP. Aspartate 189 provides a ligand contact to D-alanine. 284 to 289 (NTYGPT) is a binding site for ATP. Position 293 (valine 293) interacts with D-alanine. Residues aspartate 365 and lysine 473 each coordinate ATP. Lysine 473 serves as a coordination point for D-alanine.

The protein belongs to the ATP-dependent AMP-binding enzyme family. DltA subfamily.

It is found in the cytoplasm. It carries out the reaction holo-[D-alanyl-carrier protein] + D-alanine + ATP = D-alanyl-[D-alanyl-carrier protein] + AMP + diphosphate. It participates in cell wall biogenesis; lipoteichoic acid biosynthesis. Its function is as follows. Catalyzes the first step in the D-alanylation of lipoteichoic acid (LTA), the activation of D-alanine and its transfer onto the D-alanyl carrier protein (Dcp) DltC. In an ATP-dependent two-step reaction, forms a high energy D-alanyl-AMP intermediate, followed by transfer of the D-alanyl residue as a thiol ester to the phosphopantheinyl prosthetic group of the Dcp. D-alanylation of LTA plays an important role in modulating the properties of the cell wall in Gram-positive bacteria, influencing the net charge of the cell wall. In Staphylococcus aureus (strain Mu3 / ATCC 700698), this protein is D-alanine--D-alanyl carrier protein ligase.